The sequence spans 188 residues: Putative manganese efflux pump MntP (188 aa).

Helical transmembrane passes span 3–23, 39–59, 65–85, 104–124, 125–145, and 167–187; these read WLTILGISVALAMDAFAVALA, LGFHFGLFQALMPIGGWLLGM, ISAYDHWIAFGLLAYVGGRMV, GMTMVMLSVATSIDAFAVGLS, IAMLGVSVWLPATVIGLVAGV, and ICGGLVLCLIGLKILLEHTLL.

This sequence belongs to the MntP (TC 9.B.29) family.

It localises to the cell inner membrane. In terms of biological role, probably functions as a manganese efflux pump. The chain is Putative manganese efflux pump MntP from Citrifermentans bemidjiense (strain ATCC BAA-1014 / DSM 16622 / JCM 12645 / Bem) (Geobacter bemidjiensis).